Reading from the N-terminus, the 425-residue chain is Glutamyl-tRNA reductase (425 aa).

Substrate is bound by residues 49-52 (TCNR), Ser107, 112-114 (EPQ), and Gln118. Cys50 acts as the Nucleophile in catalysis. Residue 187–192 (GAGETI) coordinates NADP(+).

It belongs to the glutamyl-tRNA reductase family. As to quaternary structure, homodimer.

The catalysed reaction is (S)-4-amino-5-oxopentanoate + tRNA(Glu) + NADP(+) = L-glutamyl-tRNA(Glu) + NADPH + H(+). The protein operates within porphyrin-containing compound metabolism; protoporphyrin-IX biosynthesis; 5-aminolevulinate from L-glutamyl-tRNA(Glu): step 1/2. Catalyzes the NADPH-dependent reduction of glutamyl-tRNA(Glu) to glutamate 1-semialdehyde (GSA). This chain is Glutamyl-tRNA reductase, found in Pseudomonas putida (strain GB-1).